The primary structure comprises 686 residues: MSGRNNNKLPSNLPQLQNLIKRDPPAYVEEFLQQYNHYKSNMEIFKLQPNKPSKELAELVMFMAQIGHCYPEHLSEFPQELKDLLSYNHTVLDPDLRMTFCKALILLRNKNLINPSDLLELFFELLRCRDKLLRKTLYTHIVTDIKNINAKHKNNKVNVVLQNFMYTMLRDSNATAAKMSLDVMIELYRRNIWNDAKTVNVITTACFSKITKILVAALTFFLGKDEEEKQDSDSESEDDGPTARDLLVQYATGKKGSKNKKKLEKAMKVLKKQKKKKKPEVFNFSAIHLIHDPQDFAEKLLKQLESCKERFEVKMMLMNLISRLVGIHELFLFNFYPFVQRFLQPHQREVTKILLFAAQASHHLVPPEIIQSLLLTVANNFVTDKNSGEVMTVGINAIKEITARCPLAMTEELLQDLAQYKTHKDKNVMMSARTLIHLFRTLNPQMLQKKFRGKPTEASIEARIQEYGELDAKDYIPGAEVLELEKEENTENDEDGWESASLSEEEEDGEWVDVHHSSDEEQQAVAKKLDSMPMEERKAKAAAVSTSRVLTQDDFQKIRMAQMKKEMDAAPGKAQKRKYLDMDSDEESRGELLSLRDIERLHKKPKSDKETRLATAMAGRTDRKEFVRKKTKINPFSSSTNKEKKKQKNFMMMRYSQNVRSKTSRSFREKQLALRDALLKKRKRMK.

A phosphoserine mark is found at serine 232, serine 234, and serine 236. Residues 254–315 (KKGSKNKKKL…SCKERFEVKM (62 aa)) are a coiled coil. The interval 484–508 (LEKEENTENDEDGWESASLSEEEED) is disordered. The segment covering 490–508 (TENDEDGWESASLSEEEED) has biased composition (acidic residues). Threonine 551 carries the post-translational modification Phosphothreonine. The disordered stretch occupies residues 563–586 (MKKEMDAAPGKAQKRKYLDMDSDE). Phosphoserine is present on residues serine 584, serine 588, and serine 594. The interval 604-649 (KPKSDKETRLATAMAGRTDRKEFVRKKTKINPFSSSTNKEKKKQKN) is disordered.

The protein belongs to the SDA1 family.

It is found in the nucleus. Its subcellular location is the nucleolus. Required for 60S pre-ribosomal subunits export to the cytoplasm. The protein is Protein SDA1 homolog (Sdad1) of Rattus norvegicus (Rat).